Here is a 509-residue protein sequence, read N- to C-terminus: Metal transporter Nramp3 (509 aa).

Over residues 1 to 12 the composition is skewed to low complexity; that stretch reads MPQLENNEPLLI. The disordered stretch occupies residues 1–25; that stretch reads MPQLENNEPLLINEEEEEETAYDET. Residues 13-23 are compositionally biased toward acidic residues; the sequence is NEEEEEETAYD. Transmembrane regions (helical) follow at residues 56 to 76, 84 to 104, 133 to 153, 165 to 185, 193 to 213, 239 to 259, 285 to 305, 327 to 347, 383 to 403, 406 to 426, 444 to 464, and 472 to 492; these read LWLF…PGNL, AVAG…GLLV, MVLW…EVIG, ILPL…FLFL, LEAV…WMFG, AVGV…SALV, IALF…AKGF, YGGG…AAGQ, IIPT…LDVL, WLNV…LCLV, IAWL…LEFF, and VYTG…LYLI.

This sequence belongs to the NRAMP (TC 2.A.55) family. In terms of tissue distribution, expressed in vascular tissues.

Its subcellular location is the vacuole membrane. In terms of biological role, vacuolar metal transporter involved in intracellular metal homeostasis. Can transport iron (Fe), manganese (Mn) and cadmium (Cd). Regulates metal accumulation under Fe starvation. Acts redundantly with NRAMP4 to mobilize vacuolar Fe and provide sufficient Fe during seed germination. In association with NRAMP4, required for optimal growth and photosynthesis under Mn deficiency. Exports Mn from vacuoles in leaf mesophyll cells, making Mn available for functional photosystem II in chloroplasts. Involved in basal resistance to the bacterial pathogen E.chrysanthemi. This is Metal transporter Nramp3 (NRAMP3) from Arabidopsis thaliana (Mouse-ear cress).